The primary structure comprises 494 residues: Tripartite motif-containing protein 5 (494 aa).

An N-acetylalanine modification is found at Ala2. The RING-type zinc finger occupies 15–59 (CPICLELLTEPLSLDCGHSFCQACITANHKKSMLHQGERSCPLCR). Ser86 is subject to Phosphoserine. The B box-type zinc-finger motif lies at 91 to 132 (QKVDHCARHGEKLLLFCQQDGNVICWLCERSQEHRGHHTLLV). The Zn(2+) site is built by Cys96, His99, Cys118, and His124. Residues 132–222 (VEEVAQTYRE…KRLTQSENDM (91 aa)) are a coiled coil. The segment at 186 to 199 (FKQLRDILDCEESN) is required for interaction with GABARAP and for autophagy. A B30.2/SPRY domain is found at 280-494 (PDLKGMLQVF…LPMTLCSPRS (215 aa)).

The protein belongs to the TRIM/RBCC family. As to quaternary structure, can form homodimers and homotrimers. In addition to lower-order dimerization, also exhibits a higher-order multimerization and both low- and high-order multimerizations are essential for its restriction activity. Interacts with BTBD1 and BTBD2. Interacts with PSMC4, PSMC5, PSMD7 and HSPA8/HSC70. Interacts (via B30.2/SPRY domain) with HSPA1A/B. Interacts with PSMC2, MAP3K7/TAK1, TAB2 and TAB3. Interacts with SQSTM1. Interacts with TRIM6 and TRIM34. Interacts with ULK1 (phosphorylated form), GABARAP, GABARAPL1, GABARAPL2, MAP1LC3A, MAP1LC3C and BECN1. In terms of processing, degraded in a proteasome-independent fashion in the absence of viral infection but in a proteasome-dependent fashion following exposure to restriction sensitive virus. Autoubiquitinated in a RING finger- and UBE2D2-dependent manner. Monoubiquitinated by TRIM21. Deubiquitinated by Yersinia YopJ. Ubiquitination may not lead to proteasomal degradation.

Its subcellular location is the cytoplasm. The protein localises to the nucleus. It carries out the reaction S-ubiquitinyl-[E2 ubiquitin-conjugating enzyme]-L-cysteine + [acceptor protein]-L-lysine = [E2 ubiquitin-conjugating enzyme]-L-cysteine + N(6)-ubiquitinyl-[acceptor protein]-L-lysine.. Its pathway is protein modification; protein ubiquitination. Its function is as follows. Capsid-specific restriction factor that prevents infection from non-host-adapted retroviruses. Blocks viral replication early in the life cycle, after viral entry but before reverse transcription. In addition to acting as a capsid-specific restriction factor, also acts as a pattern recognition receptor that activates innate immune signaling in response to the retroviral capsid lattice. Binding to the viral capsid triggers its E3 ubiquitin ligase activity, and in concert with the heterodimeric ubiquitin conjugating enzyme complex UBE2V1-UBE2N (also known as UBC13-UEV1A complex) generates 'Lys-63'-linked polyubiquitin chains, which in turn are catalysts in the autophosphorylation of the MAP3K7/TAK1 complex (includes TAK1, TAB2, and TAB3). Activation of the MAP3K7/TAK1 complex by autophosphorylation results in the induction and expression of NF-kappa-B and MAPK-responsive inflammatory genes, thereby leading to an innate immune response in the infected cell. Plays a role in regulating autophagy through activation of autophagy regulator BECN1 by causing its dissociation from its inhibitors BCL2 and TAB2. This chain is Tripartite motif-containing protein 5 (TRIM5), found in Pithecia pithecia (White-faced saki).